A 1935-amino-acid polypeptide reads, in one-letter code: MVDAEMAAFGEAAPYLRKSEKERLEAQTRPFDLKKDVYVPDDKEEFVKAKILSREGGKVTAETEHGKTVTVKEDQVLQQNPPKFDKIEDMAMLTFLHEPAVLYNLKERYASWMIYTYSGLFCVTINPYKWLPVYNAEVVAAYRGKKRSEAPPHIFSISDNAYQYMLTDRENQSILITGESGAGKTVNTKRVIQYFAVIAAIGDRSKKEQTPGKGTLEDQIIQANPALEAFGNAKTVRNDNSSRFGKFIRIHFGATGKLASADIETYLLEKSRVIFQLKAERDYHIFYQILSNKKPELLDMLLITNNPYDYAFISQGETTVASIDDAEELMATDNAFDVLGFTSEEKNSMYKLTGAIMHFGNMKFKLKQREEQAEPDGTEEADKSAYLMGLNSADLLKGLCHPRVKVGNEYVTKGQNVQQVMYATGALAKAVYEKMFNWMVTRINTTLETKQPRQYFIGVLDIAGFEIFDFNSFEQLCINFTNEKLQQFFNHHMFVLEQEEYKKEGIEWEFIDFGMDLQACIDLIEKPMGIMSILEEECMFPKATDMTFKAKLYDNHLGKSNNFQKPRNIKGRPEAHFALIHYAGTVDYNIIGWLQKNKDPLNETVVDLYKKSSLKLLSNLFANYAGADTPVEKGKGKAKKGSSFQTVSALHRENLNKLMTNLRSTHPHFVRCIIPNETKSPGVIDNPLVMHQLRCNGVLEGIRICRKGFPNRILYGDFRQRYRILNPAAIPEGQFIDSRKGAEKLLGSLDIDHNQYKFGHTKVFFKAGLLGLLEEMRDERLSRIITRIQAQSRGVLSRMEFKKLLERRDSLLIIQWNIRAFMSVKNWPWMKLYFKIKPLLKSAETEKEMATMKEEFGRLKEALEKSEARRKELEEKMVSLLQEKNDLQLQVQAEQDNLADAEERCDQLIKNKIQLEAKVKEMTERLEDEEEMNAELTAKKRKLEDECSELKRDIDDLELTLAKVEKEKHATENKVKNLTEEMAGLDEIIAKLTKEKKALQEAHQQALDDLQAEEDKVNTLTKAKVKLEQHVDDLEGSLEQEKKVRMDLERAKRKLEGDLKLTQESIMDLENDKQQLDERLKKKDFELNALNARIEDEQALGSQLQKKLKELQARIEELEEELEAERTARAKVEKLRSDLSRELEEISERLEEAGGATSVQIEMNKKREAEFQKMRRDLEEATLQHEATAAALRKKHADSVAELGEQIDNLQRVKQKLEKEKSEFKLELDDVTSNMEQIIKAKANLEKMCRTLEDQMNEHRSKAEETQRSVNDLTSQRAKLQTENGELSRQLDEKEALISQLTRGKLTYTQQLEDLKRQLEEEVKAKNALAHALQSARHDCDLLREQYEEETEAKAELQRVLSKANSEVAQWRTKYETDAIQRTEELEEAKKKLAQRLQDAEEAVEAVNAKCSSLEKTKHRLQNEIEDLMVDVERSNAAAAALDKKQRNFDKILAEWKQKYEESQSELESSQKEARSLSTELFKLKNAYEESLEHLETFKRENKNLQEEISDLTEQLGSSGKTIHELEKVRKQLEAEKLELQSALEEAEASLEHEEGKILRAQLEFNQIKAEMERKLAEKDEEMEQAKRNHLRVVDSLQTSLDAETRSRNEALRVKKKMEGDLNEMEIQLSHANRMAAEAQKQVKSLQSLLKDTQIQLDDAVRANDDLKENIAIVERRNNLLQAELEELRAVVEQTERSRKLAEQELIETSERVQLLHSQNTSLINQKKKMEADLSQLQTEVEEAVQECRNAEEKAKKAITDAAMMAEELKKEQDTSAHLERMKKNMEQTIKDLQHRLDEAEQIALKGGKKQLQKLEARVRELENELEAEQKRNAESVKGMRKSERRIKELTYQTEEDRKNLLRLQDLVDKLQLKVKAYKRQAEEAEEQANTNLSKFRKVQHELDEAEERADIAESQVNKLRAKSRDIGTKGLNEE.

The 50-residue stretch at 32–81 (DLKKDVYVPDDKEEFVKAKILSREGGKVTAETEHGKTVTVKEDQVLQQNP) folds into the Myosin N-terminal SH3-like domain. One can recognise a Myosin motor domain in the interval 85-778 (DKIEDMAMLT…LLGLLEEMRD (694 aa)). Residue Lys129 is modified to N6,N6,N6-trimethyllysine. 178–185 (GESGAGKT) serves as a coordination point for ATP. Thr378 is modified (phosphothreonine). Actin-binding regions lie at residues 655–677 (LNKL…IPNE) and 757–771 (KFGH…GLLG). Residues 781–810 (LSRIITRIQAQSRGVLSRMEFKKLLERRDS) enclose the IQ domain. Residues 839-1935 (LLKSAETEKE…DIGTKGLNEE (1097 aa)) adopt a coiled-coil conformation. Residues Ser1137 and Ser1269 each carry the phosphoserine modification. At Thr1282 the chain carries Phosphothreonine. Tyr1308 is subject to Phosphotyrosine. The residue at position 1309 (Thr1309) is a Phosphothreonine. Ser1510 bears the Phosphoserine mark. Thr1513 is subject to Phosphothreonine. Residues 1907 to 1935 (EERADIAESQVNKLRAKSRDIGTKGLNEE) are disordered. Positions 1923 to 1935 (KSRDIGTKGLNEE) are enriched in basic and acidic residues.

This sequence belongs to the TRAFAC class myosin-kinesin ATPase superfamily. Myosin family. As to quaternary structure, muscle myosin is a hexameric protein that consists of 2 heavy chain subunits (MHC), 2 alkali light chain subunits (MLC) and 2 regulatory light chain subunits (MLC-2). Interacts with ECPAS. Interacts (via C-terminus) with LRRC39.

The protein localises to the cytoplasm. The protein resides in the myofibril. It localises to the sarcomere. Its function is as follows. Myosins are actin-based motor molecules with ATPase activity essential for muscle contraction. Forms regular bipolar thick filaments that, together with actin thin filaments, constitute the fundamental contractile unit of skeletal and cardiac muscle. This Sus scrofa (Pig) protein is Myosin-7 (MYH7).